A 292-amino-acid chain; its full sequence is Phosphoribulokinase, chromosomal (292 aa).

12–20 (GSSGAGTTS) is an ATP binding site.

Belongs to the phosphoribulokinase family. In terms of assembly, homooctamer.

It catalyses the reaction D-ribulose 5-phosphate + ATP = D-ribulose 1,5-bisphosphate + ADP + H(+). The protein operates within carbohydrate biosynthesis; Calvin cycle. The chain is Phosphoribulokinase, chromosomal (cfxP) from Cupriavidus necator (strain ATCC 17699 / DSM 428 / KCTC 22496 / NCIMB 10442 / H16 / Stanier 337) (Ralstonia eutropha).